We begin with the raw amino-acid sequence, 438 residues long: Thymidine phosphorylase (438 aa).

This sequence belongs to the thymidine/pyrimidine-nucleoside phosphorylase family. Homodimer.

It carries out the reaction thymidine + phosphate = 2-deoxy-alpha-D-ribose 1-phosphate + thymine. It participates in pyrimidine metabolism; dTMP biosynthesis via salvage pathway; dTMP from thymine: step 1/2. Its function is as follows. The enzymes which catalyze the reversible phosphorolysis of pyrimidine nucleosides are involved in the degradation of these compounds and in their utilization as carbon and energy sources, or in the rescue of pyrimidine bases for nucleotide synthesis. The chain is Thymidine phosphorylase from Burkholderia orbicola (strain AU 1054).